The sequence spans 125 residues: uncharacterized protein (125 aa).

Positions 15–121 (QINQSIIDVI…HSLVLEQKQL (107 aa)) constitute a PRD domain.

This is an uncharacterized protein from Haemophilus influenzae (strain ATCC 51907 / DSM 11121 / KW20 / Rd).